Here is a 285-residue protein sequence, read N- to C-terminus: MAHQAHPFRSVLYIPGSKERALEKAQGLAADAIIFDLEDAVAHDEKIHARALLKTTLETVDYGHRFRIVRVNGMDTEWGRADLEAFAEAKADAILIPKVSRAADLEAVAALVPDLPLWAMMETAQGMLNAAEIAAHPRLTGMVMGTNDLAKELGSRYRPDRLAMQAGLGLCLLAARAHGLTIVDGVYNAFKDEEGLRAECEQGRDMGFDGKTLIHPAQLEIANAVFSPSPAEIELANRQIAAFEEAERHGQGVAVVDGKIVENLHIVTARQTLAKAEAIAAFRAS.

Residues R70 and E122 each coordinate substrate. Mg(2+) is bound by residues E122 and D148.

It belongs to the HpcH/HpaI aldolase family. As to quaternary structure, homodimer or homotrimer. Requires Mg(2+) as cofactor.

The enzyme catalyses (S)-malyl-CoA + H2O = (S)-malate + CoA + H(+). Catalyzes the hydrolysis of (3S)-malyl-CoA to (3S)-malate and free CoA. Inactive towards beta-methylmalyl-CoA and other CoA esters. This is (3S)-malyl-CoA thioesterase from Cereibacter sphaeroides (strain ATCC 17029 / ATH 2.4.9) (Rhodobacter sphaeroides).